The following is a 359-amino-acid chain: Transcription factor MafA (359 aa).

The residue at position 14 (Ser14) is a Phosphoserine. A Glycyl lysine isopeptide (Lys-Gly) (interchain with G-Cter in SUMO2) cross-link involves residue Lys32. 2 disordered regions span residues 40–105 (RFCH…VGGA) and 172–226 (GGGA…AGHH). The segment covering 46–73 (PPGSLSSTPLSTPCSSVPSSPSFCAPSP) has biased composition (low complexity). A Phosphoserine modification is found at Ser49. A phosphothreonine mark is found at Thr53 and Thr57. 2 positions are modified to phosphoserine: Ser61 and Ser65. Residues 74-84 (GTGGGAGGGGS) show a composition bias toward gly residues. Residues 181–209 (GHHHGAHHTAHHHHSAHHHHHHHHHHGGS) are compositionally biased toward basic residues. Residues 210–224 (GHHGGGAGHGGGGAG) show a composition bias toward gly residues. Residues 260–285 (RLKQKRRTLKNRGYAQSCRFKRVQQR) form a basic motif region. One can recognise a bZIP domain in the interval 260-323 (RLKQKRRTLK…DLYKEKYEKL (64 aa)). The leucine-zipper stretch occupies residues 288 to 309 (LESEKCQLQSQVEQLKLEVGRL). Residues 322–359 (KLAGRGGPGGAGGAGFPREPSPAQAGPGAAKGAPDFFL) are disordered. A compositionally biased stretch (gly residues) spans 325–336 (GRGGPGGAGGAG). Low complexity predominate over residues 343–359 (PAQAGPGAAKGAPDFFL).

It belongs to the bZIP family. Maf subfamily. Forms homodimers. Interacts with NEUROD1 and PDX1. May interact with MAFB, FOS, JUN and PCAF. Post-translationally, ubiquitinated, leading to its degradation by the proteasome. Phosphorylated at tyrosines. In terms of tissue distribution, expressed in brain, lung, spleen, pancreas and kidney. In the pancreas, expressed in the insulin-producing beta-cells of the islets of Langerhans (at protein level). Also expressed in the eye.

The protein localises to the nucleus. Functionally, transcriptional factor that activates insulin gene expression. Acts synergistically with NEUROD1/BETA2 and PDX1. Binds the insulin enhancer C1/RIPE3b element. Binds to consensus TRE-type MARE 5'-TGCTGACTCAGCA-3' DNA sequence. The chain is Transcription factor MafA (Mafa) from Mus musculus (Mouse).